A 208-amino-acid chain; its full sequence is EF-hand protein 5 variant 2 (208 aa).

The segment at M1 to A35 is disordered. EF-hand domains lie at M64–E98, E99–D134, T135–R170, and S171–N206. Ca(2+)-binding residues include E118, D123, D148, T152, and Y154.

In Trypanosoma cruzi, this protein is EF-hand protein 5 variant 2.